The sequence spans 442 residues: 3-dehydroquinate synthase, chloroplastic (442 aa).

Residues 1-58 constitute a chloroplast transit peptide; the sequence is MAANTISLSNVAASKNLNSFQSRAFIAPPTIFFPVASAKSKPGELSLSSTTLSRSRVR. An N-acetylalanine modification is found at Ala59. NAD(+) contacts are provided by residues Asn119, 150-152, Lys155, 183-188, 208-209, Lys221, Lys230, and 248-251; these read DGE, GGVIGD, TT, and TLNT. Glu263 contacts a divalent metal cation. Lys305 is an NAD(+) binding site. The a divalent metal cation site is built by His326 and His343.

Belongs to the sugar phosphate cyclases superfamily. Dehydroquinate synthase family. Homodimer. Requires a divalent metal cation as cofactor. The cofactor is NAD(+).

It localises to the plastid. The protein resides in the chloroplast. The catalysed reaction is 7-phospho-2-dehydro-3-deoxy-D-arabino-heptonate = 3-dehydroquinate + phosphate. It functions in the pathway metabolic intermediate biosynthesis; chorismate biosynthesis; chorismate from D-erythrose 4-phosphate and phosphoenolpyruvate: step 2/7. In terms of biological role, catalyzes the second step in the shikimate pathway. This is 3-dehydroquinate synthase, chloroplastic (DHQS) from Arabidopsis thaliana (Mouse-ear cress).